The sequence spans 187 residues: 2-oxoglutarate synthase subunit KorC (187 aa).

Heterotetramer of the KorA, KorB, KorC and KorD subunits.

It catalyses the reaction 2 oxidized [2Fe-2S]-[ferredoxin] + 2-oxoglutarate + CoA = succinyl-CoA + 2 reduced [2Fe-2S]-[ferredoxin] + CO2 + H(+). This Archaeoglobus fulgidus (strain ATCC 49558 / DSM 4304 / JCM 9628 / NBRC 100126 / VC-16) protein is 2-oxoglutarate synthase subunit KorC (korC).